We begin with the raw amino-acid sequence, 561 residues long: Septation ring formation regulator EzrA (561 aa).

Residues 1–3 (MWI) are Extracellular-facing. A helical membrane pass occupies residues 4 to 22 (VVFSLLVLTVTFFVYGALR). Residues 23–561 (RKAFYKRVDK…VLEKVQHLAG (539 aa)) are Cytoplasmic-facing. Coiled-coil stretches lie at residues 98–130 (RFQK…IQVL), 166–214 (AKVF…HLLK), and 251–465 (FAID…KLSD).

Belongs to the EzrA family.

It localises to the cell membrane. Its function is as follows. Negative regulator of FtsZ ring formation; modulates the frequency and position of FtsZ ring formation. Inhibits FtsZ ring formation at polar sites. Interacts either with FtsZ or with one of its binding partners to promote depolymerization. This chain is Septation ring formation regulator EzrA, found in Halalkalibacterium halodurans (strain ATCC BAA-125 / DSM 18197 / FERM 7344 / JCM 9153 / C-125) (Bacillus halodurans).